The sequence spans 389 residues: MGLKAVHFGAGNIGRGFVAEFLHKSGYEVVFCDVMDSIIQKLQTTPSYKVIQVGAEGTSEDTITNYRAINSKTHEADVIEEIRTADVVTCSVGPNILKFIAPVIAKGIDGRSNDATPIAVIACENAIGATDTLANHIKGDHTPQERLDDHHQRARYANSAIDRIVPAQDPDAGLDVKLEKFYEWVVDRTPFSDHEPPAIQGIKWVDDLIPYIERKLFTVNTGHAAAAYHGYYHQKATVYDALQDPNILKEVHAALEETSRLIVGKHGIEAQEQKDYVDKIITRIGNPHLEDAVERVGRAPLRKLSRKERFIAPAAELAEEGKDFTALLDAAEMAFRFQNVEGDEESKELAKIMSENSAEQVVEKVCGLQSDHPLFPHVVAVVKKVQADE.

Position 5–16 (5–16) interacts with NAD(+); sequence AVHFGAGNIGRG. Residue Lys-215 is part of the active site.

This sequence belongs to the mannitol dehydrogenase family. As to quaternary structure, monomer.

It catalyses the reaction D-mannitol 1-phosphate + NAD(+) = beta-D-fructose 6-phosphate + NADH + H(+). In terms of biological role, catalyzes the NAD(H)-dependent interconversion of D-fructose 6-phosphate and D-mannitol 1-phosphate in the mannitol metabolic pathway. The sequence is that of Mannitol-1-phosphate 5-dehydrogenase from Sclerotinia sclerotiorum (strain ATCC 18683 / 1980 / Ss-1) (White mold).